We begin with the raw amino-acid sequence, 322 residues long: Sideroflexin-2 (322 aa).

Met1 carries the post-translational modification N-acetylmethionine. Helical transmembrane passes span 100-122 (MIIT…WQWV), 142-164 (SVRQ…AVGM), 174-192 (LVGR…CVNI), 228-250 (VVIS…MERL), and 265-287 (PLQV…GLFP).

This sequence belongs to the sideroflexin family.

It is found in the mitochondrion inner membrane. The protein resides in the mitochondrion outer membrane. The enzyme catalyses L-serine(in) = L-serine(out). In terms of biological role, mitochondrial amino-acid transporter that mediates transport of serine into mitochondria. Involved in mitochondrial iron homeostasis by regulating heme biosynthesis. This Bos taurus (Bovine) protein is Sideroflexin-2.